The following is a 383-amino-acid chain: Na(+)/H(+) antiporter NhaA (383 aa).

A run of 11 helical transmembrane segments spans residues 10–30 (LIGGLILFSAALLAIVVNNSP), 56–76 (LMHWINDGLMAIYFLYIGLEI), 91–111 (IITPAIAAFAGLAMPSLIYLS), 121–141 (GWAIPSATDIAFTLAILALLG), 150–170 (LLVITIAIFDDIAAIAIIAIF), 174–194 (SLSLLSLSLGTLFILAMIICN), 206–226 (VVLGFFAWFCTIKSGVHATLA), 254–274 (PWIIYFILPVFAFANAGISFS), 289–308 (IIWGLFVGKQLGIFSILAVF), 327–347 (GISLLCGIGFTMSLFIGVLAF), and 355–375 (AIKIGVVVGSVLSGFFGYIVL).

It belongs to the NhaA Na(+)/H(+) (TC 2.A.33) antiporter family.

The protein localises to the cell inner membrane. It carries out the reaction Na(+)(in) + 2 H(+)(out) = Na(+)(out) + 2 H(+)(in). Functionally, na(+)/H(+) antiporter that extrudes sodium in exchange for external protons. The protein is Na(+)/H(+) antiporter NhaA of Francisella tularensis subsp. tularensis (strain WY96-3418).